Here is a 441-residue protein sequence, read N- to C-terminus: MIKAVRGTRDLLPPDTELWNRVEATVRDVFQRYNFHEIRTPIFEDTALFARGVGEETDIVSKEMFTWEDKARAQSEKSQQLTLRPENTAGVVRAYIEHQMAKSGGLQKLYYIGPQFRRERPQKGRYRQFFQIGAEVIGPPPSGSESPARDAEVIEMLATLLEEVGLTGWTLYLNSVGDANCRPAYNEALRQALASVKDKMCGDCQRRAETNPLRVLDCKVPEDQPIIETLPKIGDYLDDACKAHFAAVRAMLDKVGVPYTVNPRMVRGLDYYTRTTFEFTHGELGAQSAVLGGGRYDGLSEALDGPKAPGIGFAIGEDRLVMALQAAKPAEPMTIDAYVAPLGAGTNAEALGICRKLRRQGLRVELGDESFRLKKSFEAAERAGAKYIVICGENEVANNEFSVKELATGKQESVARAELAFYIRNHGARKTGGENIEPDEQ.

Belongs to the class-II aminoacyl-tRNA synthetase family. Homodimer.

Its subcellular location is the cytoplasm. It carries out the reaction tRNA(His) + L-histidine + ATP = L-histidyl-tRNA(His) + AMP + diphosphate + H(+). This Koribacter versatilis (strain Ellin345) protein is Histidine--tRNA ligase.